Here is a 1112-residue protein sequence, read N- to C-terminus: Rho GTPase-activating protein 7 (1112 aa).

The 68-residue stretch at 37–104 (LAEIEAKEAC…LNKCAVMKLE (68 aa)) folds into the SAM domain. S112, S115, and S155 each carry phosphoserine. Disordered regions lie at residues 146 to 203 (SPKQ…APAR), 318 to 350 (RSISSSTQTSSSSSQSETSSNVSTPSPVTRTRS), 405 to 459 (PKAL…VSSR), and 512 to 574 (SDEG…GVGA). A compositionally biased stretch (polar residues) spans 183 to 193 (VHSTGSLTTHA). Positions 296 to 468 (QLNCVEISAL…RLSIYDNVPG (173 aa)) are focal adhesion-targeting (FAT). Composition is skewed to low complexity over residues 320–348 (ISSSTQTSSSSSQSETSSNVSTPSPVTRT) and 409–423 (SNGSFSPSGNNSSVN). S343 carries the phosphoserine modification. The span at 437-446 (LRRENSSPKE) shows a compositional bias: basic and acidic residues. Positions 520–532 (ALDSVSPCPSSPK) are enriched in polar residues. Basic and acidic residues predominate over residues 534–544 (IHLDVDNDRAT). Residues 547-556 (DLDSTGNSLN) are compositionally biased toward polar residues. The tract at residues 635–657 (KHGFSWAVPKFMKRIKVPDYKDR) is polybasic cluster (PBR). The Rho-GAP domain maps to 662–868 (VPLTVNVQRT…HMIAECKKLF (207 aa)). The region spanning 898 to 1105 (CNDDSADYQH…RDSFSHQNTE (208 aa)) is the START domain.

Interacts with EF1A1, facilitates EF1A1 distribution to the membrane periphery and ruffles upon growth factor stimulation and suppresses cell migration. Interacts with tensin TNS1 (via N-terminus); the interaction is decreased by phosphorylation of TNS1. Interacts with TNS3 and PTEN; in resting cells, interacts with TNS3 (via C2 tensin-type domain) but, following growth factor stimulation, TNS3 and PTEN are phosphorylated which leads to weakened interaction with TNS3 and enhanced interaction with PTEN. Interacts (via C-terminus) with tensin TNS4 (via SH2 domain); the interaction is independent of tyrosine phosphorylation of DLC1.

The protein resides in the cytoplasm. The protein localises to the cell junction. Its subcellular location is the focal adhesion. It is found in the membrane. Its function is as follows. Functions as a GTPase-activating protein for the small GTPases RHOA, RHOB, RHOC and CDC42, terminating their downstream signaling. This induces morphological changes and detachment through cytoskeletal reorganization, playing a critical role in biological processes such as cell migration and proliferation. Also functions in vivo as an activator of the phospholipase PLCD1. Active DLC1 increases cell migration velocity but reduces directionality. Required for growth factor-induced epithelial cell migration; in resting cells, interacts with TNS3 while PTEN interacts with the p85 regulatory subunit of the PI3K kinase complex but growth factor stimulation induces phosphorylation of TNS3 and PTEN, causing them to change their binding preference so that PTEN interacts with DLC1 and TNS3 interacts with p85. The PTEN-DLC1 complex translocates to the posterior of migrating cells to activate RHOA while the TNS3-p85 complex translocates to the leading edge of migrating cells to promote RAC1 activation. In Bos taurus (Bovine), this protein is Rho GTPase-activating protein 7 (DLC1).